The chain runs to 115 residues: Large ribosomal subunit protein bL19 (115 aa).

This sequence belongs to the bacterial ribosomal protein bL19 family.

In terms of biological role, this protein is located at the 30S-50S ribosomal subunit interface and may play a role in the structure and function of the aminoacyl-tRNA binding site. This Desulforudis audaxviator (strain MP104C) protein is Large ribosomal subunit protein bL19.